The primary structure comprises 61 residues: Small ribosomal subunit protein uS14 (61 aa).

Zn(2+) is bound by residues Cys-24, Cys-27, Cys-40, and Cys-43.

This sequence belongs to the universal ribosomal protein uS14 family. Zinc-binding uS14 subfamily. Part of the 30S ribosomal subunit. Contacts proteins S3 and S10. It depends on Zn(2+) as a cofactor.

Its function is as follows. Binds 16S rRNA, required for the assembly of 30S particles and may also be responsible for determining the conformation of the 16S rRNA at the A site. This is Small ribosomal subunit protein uS14 from Mycoplasmopsis agalactiae (strain NCTC 10123 / CIP 59.7 / PG2) (Mycoplasma agalactiae).